The following is a 357-amino-acid chain: Probable dual-specificity RNA methyltransferase RlmN (357 aa).

Glu92 (proton acceptor) is an active-site residue. The region spanning 98 to 336 (HKYGLSVCVT…CGVRLEHGTD (239 aa)) is the Radical SAM core domain. A disulfide bridge links Cys105 with Cys341. [4Fe-4S] cluster is bound by residues Cys112, Cys116, and Cys119. Residues 164 to 165 (GE), Ser196, 219 to 221 (SLH), and Asn297 contribute to the S-adenosyl-L-methionine site. The active-site S-methylcysteine intermediate is the Cys341.

The protein belongs to the radical SAM superfamily. RlmN family. The cofactor is [4Fe-4S] cluster.

Its subcellular location is the cytoplasm. The enzyme catalyses adenosine(2503) in 23S rRNA + 2 reduced [2Fe-2S]-[ferredoxin] + 2 S-adenosyl-L-methionine = 2-methyladenosine(2503) in 23S rRNA + 5'-deoxyadenosine + L-methionine + 2 oxidized [2Fe-2S]-[ferredoxin] + S-adenosyl-L-homocysteine. It carries out the reaction adenosine(37) in tRNA + 2 reduced [2Fe-2S]-[ferredoxin] + 2 S-adenosyl-L-methionine = 2-methyladenosine(37) in tRNA + 5'-deoxyadenosine + L-methionine + 2 oxidized [2Fe-2S]-[ferredoxin] + S-adenosyl-L-homocysteine. Its function is as follows. Specifically methylates position 2 of adenine 2503 in 23S rRNA and position 2 of adenine 37 in tRNAs. This is Probable dual-specificity RNA methyltransferase RlmN from Exiguobacterium sibiricum (strain DSM 17290 / CCUG 55495 / CIP 109462 / JCM 13490 / 255-15).